Reading from the N-terminus, the 240-residue chain is Phosphoribosylaminoimidazole-succinocarboxamide synthase (240 aa).

It belongs to the SAICAR synthetase family.

It carries out the reaction 5-amino-1-(5-phospho-D-ribosyl)imidazole-4-carboxylate + L-aspartate + ATP = (2S)-2-[5-amino-1-(5-phospho-beta-D-ribosyl)imidazole-4-carboxamido]succinate + ADP + phosphate + 2 H(+). It functions in the pathway purine metabolism; IMP biosynthesis via de novo pathway; 5-amino-1-(5-phospho-D-ribosyl)imidazole-4-carboxamide from 5-amino-1-(5-phospho-D-ribosyl)imidazole-4-carboxylate: step 1/2. In Wigglesworthia glossinidia brevipalpis, this protein is Phosphoribosylaminoimidazole-succinocarboxamide synthase.